The chain runs to 85 residues: Large ribosomal subunit protein bL27 (85 aa).

Residues 1–21 (MAHKKGVGSSRNGRDSDGQRL) are disordered.

This sequence belongs to the bacterial ribosomal protein bL27 family.

This chain is Large ribosomal subunit protein bL27, found in Citrifermentans bemidjiense (strain ATCC BAA-1014 / DSM 16622 / JCM 12645 / Bem) (Geobacter bemidjiensis).